The chain runs to 111 residues: Universal stress protein B (111 aa).

The next 2 membrane-spanning stretches (helical) occupy residues Met1–Arg21 and Phe90–Trp110.

The protein belongs to the universal stress protein B family.

The protein resides in the cell inner membrane. This Cronobacter sakazakii (strain ATCC BAA-894) (Enterobacter sakazakii) protein is Universal stress protein B.